A 316-amino-acid polypeptide reads, in one-letter code: 4-hydroxy-3-methylbut-2-enyl diphosphate reductase (316 aa).

[4Fe-4S] cluster is bound at residue Cys12. Residues His41 and His74 each contribute to the (2E)-4-hydroxy-3-methylbut-2-enyl diphosphate site. Dimethylallyl diphosphate is bound by residues His41 and His74. 2 residues coordinate isopentenyl diphosphate: His41 and His74. Cys96 is a binding site for [4Fe-4S] cluster. His124 serves as a coordination point for (2E)-4-hydroxy-3-methylbut-2-enyl diphosphate. His124 contacts dimethylallyl diphosphate. His124 is a binding site for isopentenyl diphosphate. Catalysis depends on Glu126, which acts as the Proton donor. Thr167 serves as a coordination point for (2E)-4-hydroxy-3-methylbut-2-enyl diphosphate. [4Fe-4S] cluster is bound at residue Cys197. (2E)-4-hydroxy-3-methylbut-2-enyl diphosphate-binding residues include Ser225, Ser226, Asn227, and Ser269. Positions 225, 226, 227, and 269 each coordinate dimethylallyl diphosphate. Isopentenyl diphosphate is bound by residues Ser225, Ser226, Asn227, and Ser269.

Belongs to the IspH family. As to quaternary structure, homodimer. It depends on [4Fe-4S] cluster as a cofactor.

It carries out the reaction isopentenyl diphosphate + 2 oxidized [2Fe-2S]-[ferredoxin] + H2O = (2E)-4-hydroxy-3-methylbut-2-enyl diphosphate + 2 reduced [2Fe-2S]-[ferredoxin] + 2 H(+). The catalysed reaction is dimethylallyl diphosphate + 2 oxidized [2Fe-2S]-[ferredoxin] + H2O = (2E)-4-hydroxy-3-methylbut-2-enyl diphosphate + 2 reduced [2Fe-2S]-[ferredoxin] + 2 H(+). It functions in the pathway isoprenoid biosynthesis; dimethylallyl diphosphate biosynthesis; dimethylallyl diphosphate from (2E)-4-hydroxy-3-methylbutenyl diphosphate: step 1/1. Its pathway is isoprenoid biosynthesis; isopentenyl diphosphate biosynthesis via DXP pathway; isopentenyl diphosphate from 1-deoxy-D-xylulose 5-phosphate: step 6/6. Its function is as follows. Catalyzes the conversion of 1-hydroxy-2-methyl-2-(E)-butenyl 4-diphosphate (HMBPP) into a mixture of isopentenyl diphosphate (IPP) and dimethylallyl diphosphate (DMAPP). Acts in the terminal step of the DOXP/MEP pathway for isoprenoid precursor biosynthesis. The sequence is that of 4-hydroxy-3-methylbut-2-enyl diphosphate reductase from Pectobacterium carotovorum subsp. carotovorum (strain PC1).